The primary structure comprises 159 residues: FCS-Like Zinc finger 2 (159 aa).

The FLZ-type zinc finger occupies 75–119 (HFLDSCFLCKKRLGDNRDIFMYRGDTPFCSEECREEQIERDEAKE). Over residues 113 to 122 (ERDEAKEKKQ) the composition is skewed to basic and acidic residues. Residues 113–159 (ERDEAKEKKQSLSTSVKAMRRNEKRSSSSSPTRSRNYAFRTGTVAAA) form a disordered region.

Belongs to the FLZ family. Interacts with KIN10 and KIN11 via its FLZ-type zinc finger domain. Interacts with KINB1, KINB2, KINB3 and SNF4 via its N-terminal part. Forms heterodimer with FLZ7, FLZ10, FLZ11, FLZ12, FLZ15, FLZ17 and FLZ18 in vitro.

May act as an adapter to facilitate the interaction of SnRK1 complex with effector proteins, conferring tissue- and stimulus-type specific differences in the SnRK1 regulation pathway. The sequence is that of FCS-Like Zinc finger 2 from Arabidopsis thaliana (Mouse-ear cress).